The sequence spans 381 residues: Transaldolase 1 (381 aa).

Lysine 149 (schiff-base intermediate with substrate) is an active-site residue.

It belongs to the transaldolase family. Type 2 subfamily.

Its subcellular location is the cytoplasm. It catalyses the reaction D-sedoheptulose 7-phosphate + D-glyceraldehyde 3-phosphate = D-erythrose 4-phosphate + beta-D-fructose 6-phosphate. The protein operates within carbohydrate degradation; pentose phosphate pathway; D-glyceraldehyde 3-phosphate and beta-D-fructose 6-phosphate from D-ribose 5-phosphate and D-xylulose 5-phosphate (non-oxidative stage): step 2/3. Its function is as follows. Transaldolase is important for the balance of metabolites in the pentose-phosphate pathway. This is Transaldolase 1 (tal1) from Streptomyces coelicolor (strain ATCC BAA-471 / A3(2) / M145).